We begin with the raw amino-acid sequence, 205 residues long: Holliday junction branch migration complex subunit RuvA (205 aa).

A domain I region spans residues 1 to 62 (MFEYVTGYVE…EDIMALYGFK (62 aa)). Residues 63 to 141 (TREERLLFTK…DVVPDVFVDL (79 aa)) form a domain II region. The segment at 142–152 (FSDEERFDEKK) is flexible linker. Residues 153–205 (GSSTELDEALEALRALGYAEREINRVLPELLKESLTTDQYIKKALSLLLNGKR) form a domain III region.

Belongs to the RuvA family. In terms of assembly, homotetramer. Forms an RuvA(8)-RuvB(12)-Holliday junction (HJ) complex. HJ DNA is sandwiched between 2 RuvA tetramers; dsDNA enters through RuvA and exits via RuvB. An RuvB hexamer assembles on each DNA strand where it exits the tetramer. Each RuvB hexamer is contacted by two RuvA subunits (via domain III) on 2 adjacent RuvB subunits; this complex drives branch migration. In the full resolvosome a probable DNA-RuvA(4)-RuvB(12)-RuvC(2) complex forms which resolves the HJ.

Its subcellular location is the cytoplasm. Its function is as follows. The RuvA-RuvB-RuvC complex processes Holliday junction (HJ) DNA during genetic recombination and DNA repair, while the RuvA-RuvB complex plays an important role in the rescue of blocked DNA replication forks via replication fork reversal (RFR). RuvA specifically binds to HJ cruciform DNA, conferring on it an open structure. The RuvB hexamer acts as an ATP-dependent pump, pulling dsDNA into and through the RuvAB complex. HJ branch migration allows RuvC to scan DNA until it finds its consensus sequence, where it cleaves and resolves the cruciform DNA. The polypeptide is Holliday junction branch migration complex subunit RuvA (Bacillus cytotoxicus (strain DSM 22905 / CIP 110041 / 391-98 / NVH 391-98)).